Reading from the N-terminus, the 1948-residue chain is Chromodomain-helicase-DNA-binding protein 5 (1948 aa).

Disordered regions lie at residues 1 to 136 (MRGP…SGQL), 228 to 268 (SPQQ…GRGK), and 281 to 336 (SKRK…GDGY). 2 stretches are compositionally biased toward acidic residues: residues 17–37 (EEME…EGFE) and 71–89 (NDEL…ESEG). Composition is skewed to basic residues over residues 95–114 (TKKK…KRKK) and 250–268 (GVRK…GRGK). The span at 289–299 (SEEDEPEDSDL) shows a compositional bias: acidic residues. Over residues 319-328 (KKNKRRRKKK) the composition is skewed to basic residues. 2 consecutive PHD-type zinc fingers follow at residues 341-388 (QDYC…CEKE) and 414-461 (MEFC…CTCP). Residues 341-651 (QDYCEVCQQG…HRELMLGEDA (311 aa)) form a histone-binding region. Residues 495–552 (MPPPRPLEGIPEREFFVKWAGLSYWHCSWVKELQLELYHTVMYRNYQRKNDMDEPPPF) enclose the Chromo 1 domain. The disordered stretch occupies residues 547–569 (DEPPPFDYGSGDEDGKSEKRKNK). The span at 559 to 569 (EDGKSEKRKNK) shows a compositional bias: basic and acidic residues. The 62-residue stretch at 590 to 651 (MMVHRILNHS…HRELMLGEDA (62 aa)) folds into the Chromo 2 domain. Residues 710–894 (RFSWAQGTDT…FHLLNFLTPE (185 aa)) form the Helicase ATP-binding domain. 723-730 (DEMGLGKT) is a binding site for ATP. A DEAH box motif is present at residues 845-848 (DEAH). One can recognise a Helicase C-terminal domain in the interval 1026-1191 (LLQKMLKKLR…MTKQELDDIL (166 aa)). 4 disordered regions span residues 1206–1250 (MMSQ…VEDS), 1349–1409 (YNDA…LPPL), 1521–1566 (KYST…LPDK), and 1595–1692 (TALD…EDKN). 2 stretches are compositionally biased toward acidic residues: residues 1353 to 1364 (SQEDQEWQDELS) and 1374 to 1383 (SEDEDEDFEE). Glutamine 1388 carries the post-translational modification N5-methylglutamine. The segment covering 1547–1561 (TPVPASPAQLPPAPL) has biased composition (pro residues). The residue at position 1552 (serine 1552) is a Phosphoserine. Basic and acidic residues-rich tracts occupy residues 1598–1625 (DRVE…EVEK), 1633–1650 (PLKE…DKLE), and 1657–1672 (NDFR…KEPT).

It belongs to the SNF2/RAD54 helicase family. In terms of assembly, component of the nucleosome remodeling and deacetylase (NuRD) repressor complex, composed of core proteins MTA1, MTA2, MTA3, RBBP4, RBBP7, HDAC1, HDAC2, MBD2, MBD3, and peripherally associated proteins CDK2AP1, CDK2AP2, GATAD2A, GATAD2B, CHD3, CHD4 and CHD5. The exact stoichiometry of the NuRD complex is unknown, and some subunits such as MBD2 and MBD3, GATAD2A and GATAD2B, and CHD3, CHD4 and CHD5 define mutually exclusive NuRD complexes. Interacts with HDAC2. In terms of processing, methylated at Gln-1388 by N6AMT1. Expressed in brain regions enriched in neurons and not in regions rich in glial cells (at protein level).

It is found in the nucleus. It localises to the chromosome. The enzyme catalyses ATP + H2O = ADP + phosphate + H(+). ATP-dependent chromatin-remodeling factor that binds DNA through histones and regulates gene transcription. May specifically recognize and bind trimethylated 'Lys-27' (H3K27me3) and non-methylated 'Lys-4' of histone H3. Acts as a component of the histone deacetylase NuRD complex which participates in the remodeling of chromatin. Plays a role in the development of the nervous system by activating the expression of genes promoting neuron terminal differentiation. In parallel, it may also positively regulate the trimethylation of histone H3 at 'Lys-27' thereby specifically repressing genes that promote the differentiation into non-neuronal cell lineages. Regulates the expression of genes involved in cell proliferation and differentiation. Downstream activated genes may include CDKN2A that positively regulates the p53/TP53 pathway, which in turn, prevents cell proliferation. In spermatogenesis, it probably regulates histone hyperacetylation and the replacement of histones by transition proteins in chromatin, a crucial step in the condensation of spermatid chromatin and the production of functional spermatozoa. This Rattus norvegicus (Rat) protein is Chromodomain-helicase-DNA-binding protein 5 (Chd5).